A 400-amino-acid chain; its full sequence is Argininosuccinate synthase (400 aa).

10 to 18 serves as a coordination point for ATP; that stretch reads AFSGGLDTT. L-citrulline is bound at residue tyrosine 87. Glycine 117 contributes to the ATP binding site. Positions 119, 123, and 124 each coordinate L-aspartate. Residue asparagine 123 participates in L-citrulline binding. Positions 127, 173, 182, 255, and 267 each coordinate L-citrulline.

It belongs to the argininosuccinate synthase family. Type 1 subfamily. As to quaternary structure, homotetramer.

It is found in the cytoplasm. The catalysed reaction is L-citrulline + L-aspartate + ATP = 2-(N(omega)-L-arginino)succinate + AMP + diphosphate + H(+). It participates in amino-acid biosynthesis; L-arginine biosynthesis; L-arginine from L-ornithine and carbamoyl phosphate: step 2/3. The chain is Argininosuccinate synthase from Natronomonas pharaonis (strain ATCC 35678 / DSM 2160 / CIP 103997 / JCM 8858 / NBRC 14720 / NCIMB 2260 / Gabara) (Halobacterium pharaonis).